Here is a 312-residue protein sequence, read N- to C-terminus: DNA-directed RNA polymerase subunit alpha (312 aa).

Residues 1–226 (MIEFEKPNIT…EHFKVFMSTD (226 aa)) form an alpha N-terminal domain (alpha-NTD) region. Residues 243–312 (NEKKLEMTIE…ELGLSLRQDD (70 aa)) are alpha C-terminal domain (alpha-CTD).

The protein belongs to the RNA polymerase alpha chain family. In terms of assembly, homodimer. The RNAP catalytic core consists of 2 alpha, 1 beta, 1 beta' and 1 omega subunit. When a sigma factor is associated with the core the holoenzyme is formed, which can initiate transcription.

The enzyme catalyses RNA(n) + a ribonucleoside 5'-triphosphate = RNA(n+1) + diphosphate. DNA-dependent RNA polymerase catalyzes the transcription of DNA into RNA using the four ribonucleoside triphosphates as substrates. This is DNA-directed RNA polymerase subunit alpha from Lactobacillus gasseri (strain ATCC 33323 / DSM 20243 / BCRC 14619 / CIP 102991 / JCM 1131 / KCTC 3163 / NCIMB 11718 / NCTC 13722 / AM63).